The sequence spans 589 residues: CTP synthase (589 aa).

The amidoligase domain stretch occupies residues 1–281 (MPQSRTHSRT…DAYVVRQLGL (281 aa)). A CTP-binding site is contributed by S23. S23 lines the UTP pocket. Residues 24–29 (SLGKGL) and D81 each bind ATP. Positions 81 and 155 each coordinate Mg(2+). Residues 162–164 (DIE), 202–207 (KTKPTQ), and K238 contribute to the CTP site. Residues 202–207 (KTKPTQ) and K238 contribute to the UTP site. The Glutamine amidotransferase type-1 domain occupies 306–554 (RIALVGKYVD…VDAALRHKLE (249 aa)). G369 contacts L-glutamine. C396 (nucleophile; for glutamine hydrolysis) is an active-site residue. L-glutamine-binding positions include 397–400 (LGLQ), E419, and R480. Residues H527 and E529 contribute to the active site. A disordered region spans residues 562–589 (HGEERAAADDEIAESADRDEVASVDSAG).

This sequence belongs to the CTP synthase family. Homotetramer.

The catalysed reaction is UTP + L-glutamine + ATP + H2O = CTP + L-glutamate + ADP + phosphate + 2 H(+). It carries out the reaction L-glutamine + H2O = L-glutamate + NH4(+). The enzyme catalyses UTP + NH4(+) + ATP = CTP + ADP + phosphate + 2 H(+). It participates in pyrimidine metabolism; CTP biosynthesis via de novo pathway; CTP from UDP: step 2/2. Its activity is regulated as follows. Allosterically activated by GTP, when glutamine is the substrate; GTP has no effect on the reaction when ammonia is the substrate. The allosteric effector GTP functions by stabilizing the protein conformation that binds the tetrahedral intermediate(s) formed during glutamine hydrolysis. Inhibited by the product CTP, via allosteric rather than competitive inhibition. In terms of biological role, catalyzes the ATP-dependent amination of UTP to CTP with either L-glutamine or ammonia as the source of nitrogen. Regulates intracellular CTP levels through interactions with the four ribonucleotide triphosphates. This chain is CTP synthase, found in Rhodococcus opacus (strain B4).